Consider the following 77-residue polypeptide: DNA-directed RNA polymerase subunit epsilon (77 aa).

This sequence belongs to the RNA polymerase subunit epsilon family. RNAP is composed of a core of 2 alpha, a beta and a beta' subunit. The core is associated with a delta subunit, and at least one of epsilon or omega. When a sigma factor is associated with the core the holoenzyme is formed, which can initiate transcription.

The enzyme catalyses RNA(n) + a ribonucleoside 5'-triphosphate = RNA(n+1) + diphosphate. A non-essential component of RNA polymerase (RNAP). The protein is DNA-directed RNA polymerase subunit epsilon of Lactobacillus delbrueckii subsp. bulgaricus (strain ATCC 11842 / DSM 20081 / BCRC 10696 / JCM 1002 / NBRC 13953 / NCIMB 11778 / NCTC 12712 / WDCM 00102 / Lb 14).